Reading from the N-terminus, the 390-residue chain is Probable purine permease 7 (390 aa).

10 consecutive transmembrane segments (helical) span residues Trp-42–Leu-62, Thr-74–Phe-94, Ser-110–Tyr-130, Ala-131–Ala-151, Phe-169–Val-189, Val-205–Ile-225, Leu-244–Gly-264, Thr-286–Phe-306, Phe-312–Phe-332, and Ile-341–Asp-361.

It belongs to the purine permeases (TC 2.A.7.14) family.

It localises to the membrane. This is Probable purine permease 7 (PUP7) from Arabidopsis thaliana (Mouse-ear cress).